The sequence spans 80 residues: Exodeoxyribonuclease 7 small subunit (80 aa).

This sequence belongs to the XseB family. Heterooligomer composed of large and small subunits.

It localises to the cytoplasm. The catalysed reaction is Exonucleolytic cleavage in either 5'- to 3'- or 3'- to 5'-direction to yield nucleoside 5'-phosphates.. Functionally, bidirectionally degrades single-stranded DNA into large acid-insoluble oligonucleotides, which are then degraded further into small acid-soluble oligonucleotides. In Caulobacter sp. (strain K31), this protein is Exodeoxyribonuclease 7 small subunit.